Here is an 81-residue protein sequence, read N- to C-terminus: Photosystem I iron-sulfur center (81 aa).

2 consecutive 4Fe-4S ferredoxin-type domains span residues serine 2–tryptophan 31 and isoleucine 39–tyrosine 68. Residues cysteine 11, cysteine 14, cysteine 17, cysteine 21, cysteine 48, cysteine 51, cysteine 54, and cysteine 58 each coordinate [4Fe-4S] cluster.

The eukaryotic PSI reaction center is composed of at least 11 subunits. The cofactor is [4Fe-4S] cluster.

It is found in the plastid thylakoid membrane. The catalysed reaction is reduced [plastocyanin] + hnu + oxidized [2Fe-2S]-[ferredoxin] = oxidized [plastocyanin] + reduced [2Fe-2S]-[ferredoxin]. Its function is as follows. Apoprotein for the two 4Fe-4S centers FA and FB of photosystem I (PSI); essential for photochemical activity. FB is the terminal electron acceptor of PSI, donating electrons to ferredoxin. The C-terminus interacts with PsaA/B/D and helps assemble the protein into the PSI complex. Required for binding of PsaD and PsaE to PSI. PSI is a plastocyanin-ferredoxin oxidoreductase, converting photonic excitation into a charge separation, which transfers an electron from the donor P700 chlorophyll pair to the spectroscopically characterized acceptors A0, A1, FX, FA and FB in turn. In Cuscuta gronovii (Common dodder), this protein is Photosystem I iron-sulfur center.